A 108-amino-acid chain; its full sequence is UPF0060 membrane protein YnfA (108 aa).

Topologically, residues 1–5 (MIKTT) are periplasmic. The helical transmembrane segment at 6 to 26 (LLFFATALCEIIGCFLPWLWL) threads the bilayer. Topologically, residues 27–30 (KRNA) are cytoplasmic. Residues 31–51 (SIWLLLPAGISLALFVWLLTL) traverse the membrane as a helical segment. Residues 52–60 (HPAASGRVY) are Periplasmic-facing. Residues 61–81 (AAYGGVYVCTALMWLRVVDGV) form a helical membrane-spanning segment. The Cytoplasmic segment spans residues 82–84 (KLT). The helical transmembrane segment at 85–105 (LYDWTGPLIALCGMLIIVVGW) threads the bilayer. Topologically, residues 106-108 (GRT) are periplasmic.

It belongs to the UPF0060 family.

The protein resides in the cell inner membrane. This Escherichia coli O157:H7 protein is UPF0060 membrane protein YnfA.